A 461-amino-acid polypeptide reads, in one-letter code: Hydroxyproline dehydrogenase (461 aa).

An N6-acetyllysine modification is found at Lys310.

Belongs to the proline oxidase family. The cofactor is FAD.

The enzyme catalyses trans-4-hydroxy-L-proline + a quinone = (3R,5S)-1-pyrroline-3-hydroxy-5-carboxylate + a quinol + H(+). It catalyses the reaction L-proline + a quinone = (S)-1-pyrroline-5-carboxylate + a quinol + H(+). It participates in amino-acid degradation; L-proline degradation into L-glutamate; L-glutamate from L-proline: step 1/2. Its function is as follows. Dehydrogenase that converts trans-4-L-hydroxyproline to delta-1-pyrroline-3-hydroxy-5-carboxylate (Hyp) using ubiquinone-10 as the terminal electron acceptor. Can also use proline as a substrate but with a very much lower efficiency. Does not react with other diastereomers of Hyp: trans-4-D-hydroxyproline and cis-4-L-hydroxyproline. Ubiquininone analogs such as menadione, duroquinone and ubiquinone-1 react more efficiently than oxygen as the terminal electron acceptor during catalysis. This chain is Hydroxyproline dehydrogenase, found in Bos taurus (Bovine).